Reading from the N-terminus, the 428-residue chain is Probable glucose-6-phosphate isomerase (428 aa).

The active-site Proton donor is the glutamate 269. Catalysis depends on residues histidine 290 and lysine 401.

The protein belongs to the GPI family.

The protein resides in the cytoplasm. It carries out the reaction alpha-D-glucose 6-phosphate = beta-D-fructose 6-phosphate. Its pathway is carbohydrate biosynthesis; gluconeogenesis. The protein operates within carbohydrate degradation; glycolysis; D-glyceraldehyde 3-phosphate and glycerone phosphate from D-glucose: step 2/4. Functionally, catalyzes the reversible isomerization of glucose-6-phosphate to fructose-6-phosphate. The protein is Probable glucose-6-phosphate isomerase of Natronomonas pharaonis (strain ATCC 35678 / DSM 2160 / CIP 103997 / JCM 8858 / NBRC 14720 / NCIMB 2260 / Gabara) (Halobacterium pharaonis).